The chain runs to 609 residues: UvrABC system protein C (609 aa).

One can recognise a GIY-YIG domain in the interval 13–91 (HQPGVYRMFD…IKAFQPRYNV (79 aa)). Residues 201–236 (QQVLEHLIKKMEQASMQLNFEQAAYFRDQIQAIRAV) enclose the UVR domain.

Belongs to the UvrC family. In terms of assembly, interacts with UvrB in an incision complex.

It is found in the cytoplasm. In terms of biological role, the UvrABC repair system catalyzes the recognition and processing of DNA lesions. UvrC both incises the 5' and 3' sides of the lesion. The N-terminal half is responsible for the 3' incision and the C-terminal half is responsible for the 5' incision. The sequence is that of UvrABC system protein C from Histophilus somni (strain 129Pt) (Haemophilus somnus).